The sequence spans 319 residues: Protein sprouty homolog 1 (319 aa).

At Met1 the chain carries N-acetylmethionine. Residues 54-157 (TEGPSVVKRP…HRSERAIRTQ (104 aa)) form a disordered region. Basic and acidic residues predominate over residues 69-79 (PRQEKHERTHE). Over residues 112-131 (SRSTSTGSAASSGSNSSASS) the composition is skewed to low complexity. The 113-residue stretch at 183-295 (QCGKCKCGEC…CYDWIHRPGC (113 aa)) folds into the SPR domain.

Belongs to the sprouty family. Forms heterodimers with SPRY2. Interacts with TESK1. Interacts with CAV1 (via C-terminus).

The protein resides in the cytoplasm. Its subcellular location is the membrane. Inhibits fibroblast growth factor (FGF)-induced retinal lens fiber differentiation, probably by inhibiting FGF-mediated phosphorylation of ERK1/2. Inhibits TGFB-induced epithelial-to-mesenchymal transition in lens epithelial cells. In Bos taurus (Bovine), this protein is Protein sprouty homolog 1 (SPRY1).